The sequence spans 344 residues: Ferrochelatase (344 aa).

2 residues coordinate Fe cation: H191 and E271.

Belongs to the ferrochelatase family.

Its subcellular location is the cytoplasm. The enzyme catalyses heme b + 2 H(+) = protoporphyrin IX + Fe(2+). Its pathway is porphyrin-containing compound metabolism; protoheme biosynthesis; protoheme from protoporphyrin-IX: step 1/1. Catalyzes the ferrous insertion into protoporphyrin IX. This Pelagibacter ubique (strain HTCC1062) protein is Ferrochelatase.